Consider the following 700-residue polypeptide: Receptor-type tyrosine-protein phosphatase epsilon (700 aa).

The N-terminal stretch at 1–19 is a signal peptide; that stretch reads MEPLCPLLLVGFSLPLARA. Residues 20-46 lie on the Extracellular side of the membrane; the sequence is LRGNETTADSNETTTTSGPPDPGASQP. N-linked (GlcNAc...) asparagine glycosylation is found at Asn23 and Asn30. The chain crosses the membrane as a helical span at residues 47–69; that stretch reads LLAWLLLPLLLLLLVLLLAAYFF. Topologically, residues 70–700 are cytoplasmic; the sequence is RFRKQRKAVV…DIFSDYANFK (631 aa). 2 Tyrosine-protein phosphatase domains span residues 135-394 and 426-689; these read FREE…LLEY and LEEE…VQDF. Substrate-binding positions include Asp303, 335–341, and Gln379; that span reads CSAGVGR. The active-site Phosphocysteine intermediate is the Cys335. Cys630 acts as the Phosphocysteine intermediate in catalysis. Position 696 is a phosphotyrosine (Tyr696).

The protein belongs to the protein-tyrosine phosphatase family. Receptor class 4 subfamily. In terms of assembly, monomer. Isoform 2: Homodimer. Can form oligomers. Dimerization is increased by oxidative stress and decreased by EGFR. Isoform 2 interacts with GRB2. In terms of processing, a catalytically active cytoplasmic form (p65) is produced by proteolytic cleavage of either isoform 1, isoform 2 or isoform 3. Post-translationally, isoform 1 and isoform 2 are phosphorylated on tyrosine residues by tyrosine kinase Neu. Isoform 1 is glycosylated. In terms of tissue distribution, expressed in giant cell tumor (osteoclastoma rich in multinucleated osteoclastic cells).

It localises to the cell membrane. Its subcellular location is the cytoplasm. The enzyme catalyses O-phospho-L-tyrosyl-[protein] + H2O = L-tyrosyl-[protein] + phosphate. Isoform 1 plays a critical role in signaling transduction pathways and phosphoprotein network topology in red blood cells. May play a role in osteoclast formation and function. In terms of biological role, isoform 2 acts as a negative regulator of insulin receptor (IR) signaling in skeletal muscle. Regulates insulin-induced tyrosine phosphorylation of insulin receptor (IR) and insulin receptor substrate 1 (IRS-1), phosphorylation of protein kinase B and glycogen synthase kinase-3 and insulin induced stimulation of glucose uptake. Functionally, isoform 1 and isoform 2 act as a negative regulator of FceRI-mediated signal transduction leading to cytokine production and degranulation, most likely by acting at the level of SYK to affect downstream events such as phosphorylation of SLP76 and LAT and mobilization of Ca(2+). This Homo sapiens (Human) protein is Receptor-type tyrosine-protein phosphatase epsilon (PTPRE).